Reading from the N-terminus, the 355-residue chain is MSEISAQLVKKLRDLTDVGMMDCKKALVEVAGDLQKAIDFLREKGLSKAAKKADRIASEGVVALEVAPDFKSAVMVEINSETDFVAKNEGFKELVKKTLETIKVHNAHTREELLKSSLDNKPFEEYLHSQIAVIGENILVRKIANSKAPSSHIINGYAHSNARVGVLITMKYNNEKNAPKAVELARNIAMHAAAMKPQVLDCKDFSLDFVKKETLVLIAEIEKDNEEAKRLGKPLKNIPTFGSRIELSDEVLAHQKKVFEDELKEQGKPEKIWDKIVLGKMERFIADNTLIDQRLTLLGQFYVMDDKKTIAQVIADYSKELNDTLEITEYVRFELGEGIEKKAENFAEEVALQMK.

Residues 82–85 (TDFV) are involved in Mg(2+) ion dislocation from EF-Tu.

It belongs to the EF-Ts family.

The protein localises to the cytoplasm. Associates with the EF-Tu.GDP complex and induces the exchange of GDP to GTP. It remains bound to the aminoacyl-tRNA.EF-Tu.GTP complex up to the GTP hydrolysis stage on the ribosome. In Helicobacter acinonychis (strain Sheeba), this protein is Elongation factor Ts.